The chain runs to 329 residues: MTLRNDWTRDEIQALYDQPFLDLVFQAQQVHREHFSANTIQVSTLLSIKTGKCPEDCKYCSQSAHYDSKLEAEKRIAVDKVISEAKAAKDSGSSRFCMGAAWRNPHERDMPYVLEMVREVKALGLETCMTLGMLNQSQAERLSDAGLDYYNHNLDTSREYYNNIISTRTFDDRLNTLDHVRSAGMKVCSGGIVGLGEQKQDRIGLLHELATLPIHPESVPINMLVPIEGTPLADVEKLDVTEWIRTIAVARIIMPYSYIRLSAGRESLSDSDQALAFMAGANSLFSGDKLLTTPNAGEGKDQVLFAKLGLVAEKPKVSVRAMAVDAMSA.

The Radical SAM core domain occupies 38–262 (NTIQVSTLLS…IMPYSYIRLS (225 aa)). Residues cysteine 53, cysteine 57, and cysteine 60 each contribute to the [4Fe-4S] cluster site. Positions 97, 128, 188, and 260 each coordinate [2Fe-2S] cluster.

This sequence belongs to the radical SAM superfamily. Biotin synthase family. In terms of assembly, homodimer. [4Fe-4S] cluster is required as a cofactor. Requires [2Fe-2S] cluster as cofactor.

It carries out the reaction (4R,5S)-dethiobiotin + (sulfur carrier)-SH + 2 reduced [2Fe-2S]-[ferredoxin] + 2 S-adenosyl-L-methionine = (sulfur carrier)-H + biotin + 2 5'-deoxyadenosine + 2 L-methionine + 2 oxidized [2Fe-2S]-[ferredoxin]. The protein operates within cofactor biosynthesis; biotin biosynthesis; biotin from 7,8-diaminononanoate: step 2/2. In terms of biological role, catalyzes the conversion of dethiobiotin (DTB) to biotin by the insertion of a sulfur atom into dethiobiotin via a radical-based mechanism. The chain is Biotin synthase from Acinetobacter baylyi (strain ATCC 33305 / BD413 / ADP1).